A 431-amino-acid polypeptide reads, in one-letter code: Peptidase B (431 aa).

Positions 196 and 201 each coordinate Mn(2+). Lysine 208 is an active-site residue. Mn(2+) contacts are provided by aspartate 219, aspartate 278, and glutamate 280. Arginine 282 is an active-site residue.

Belongs to the peptidase M17 family. As to quaternary structure, homohexamer. Mn(2+) serves as cofactor.

Its subcellular location is the cytoplasm. The catalysed reaction is Release of an N-terminal amino acid, Xaa, from a peptide or arylamide. Xaa is preferably Glu or Asp but may be other amino acids, including Leu, Met, His, Cys and Gln.. Probably plays an important role in intracellular peptide degradation. The chain is Peptidase B from Serratia proteamaculans (strain 568).